A 179-amino-acid chain; its full sequence is Replication restart protein DnaT (179 aa).

The interval 156-179 (GGLPKRDVNTVSEPDSQIPPGFRG) is disordered.

The protein belongs to the DnaT family. Homooligomerizes. Interacts with PriB. Component of the replication restart primosome. Primosome assembly occurs via a 'hand-off' mechanism. PriA binds to replication forks, subsequently PriB then DnaT bind; DnaT then displaces ssDNA to generate the helicase loading substrate.

In terms of biological role, involved in the restart of stalled replication forks, which reloads the replicative helicase on sites other than the origin of replication. Can function in multiple replication restart pathways. Displaces ssDNA from a PriB-ssDNA complex. Probably forms a spiral filament on ssDNA. In Shigella dysenteriae serotype 1 (strain Sd197), this protein is Replication restart protein DnaT.